The primary structure comprises 118 residues: Ribosome-binding factor A (118 aa).

Belongs to the RbfA family. Monomer. Binds 30S ribosomal subunits, but not 50S ribosomal subunits or 70S ribosomes.

Its subcellular location is the cytoplasm. One of several proteins that assist in the late maturation steps of the functional core of the 30S ribosomal subunit. Associates with free 30S ribosomal subunits (but not with 30S subunits that are part of 70S ribosomes or polysomes). Required for efficient processing of 16S rRNA. May interact with the 5'-terminal helix region of 16S rRNA. This Latilactobacillus sakei subsp. sakei (strain 23K) (Lactobacillus sakei subsp. sakei) protein is Ribosome-binding factor A.